The chain runs to 243 residues: Glycerophosphodiester phosphodiesterase (243 aa).

A GP-PDE domain is found at 3–239; that stretch reads TLVIAHRGDS…DDPETLINLV (237 aa). The active-site Proton acceptor is histidine 8. Ca(2+)-binding residues include glutamate 35 and aspartate 37. Catalysis depends on histidine 50, which acts as the Proton donor. Residue glutamate 110 participates in Ca(2+) binding.

The protein belongs to the glycerophosphoryl diester phosphodiesterase family. In terms of assembly, homodimer. The cofactor is Mg(2+). Requires Ca(2+) as cofactor.

It carries out the reaction a sn-glycero-3-phosphodiester + H2O = an alcohol + sn-glycerol 3-phosphate + H(+). It catalyses the reaction sn-glycerol 3-phosphocholine + H2O = sn-glycerol 3-phosphate + choline + H(+). With respect to regulation, inhibited by EDTA. Glycerophosphodiester phosphodiesterase hydrolyzes glycerophosphodiesters into glycerol-3-phosphate (G3P) and the corresponding alcohol. Can use glycerophosphocholine. The polypeptide is Glycerophosphodiester phosphodiesterase (Caldanaerobacter subterraneus subsp. tengcongensis (strain DSM 15242 / JCM 11007 / NBRC 100824 / MB4) (Thermoanaerobacter tengcongensis)).